The following is a 121-amino-acid chain: Oxalate-binding protein (121 aa).

A Cupin type-2 domain is found at 49 to 117 (RMKLPPGSSV…GNTDLEFLAV (69 aa)). The Mn(2+) site is built by His-61, His-63, and Glu-68. Tyr-70 serves as a coordination point for oxalate. His-102 provides a ligand contact to Mn(2+).

As to quaternary structure, homodimer.

In terms of biological role, binds oxalate. The polypeptide is Oxalate-binding protein (Thermotoga maritima (strain ATCC 43589 / DSM 3109 / JCM 10099 / NBRC 100826 / MSB8)).